Reading from the N-terminus, the 223-residue chain is Cytidylate kinase (223 aa).

Residue 12 to 20 participates in ATP binding; it reads GPSGVGKGT.

It belongs to the cytidylate kinase family. Type 1 subfamily.

The protein localises to the cytoplasm. The catalysed reaction is CMP + ATP = CDP + ADP. The enzyme catalyses dCMP + ATP = dCDP + ADP. The polypeptide is Cytidylate kinase (Xylella fastidiosa (strain 9a5c)).